A 288-amino-acid chain; its full sequence is Protoheme IX farnesyltransferase 2 (288 aa).

The next 8 membrane-spanning stretches (helical) occupy residues 16 to 36, 38 to 58, 88 to 108, 111 to 131, 139 to 159, 166 to 186, 227 to 247, and 266 to 286; these read IGVF…GAVP, FAPV…AGAF, LWPL…AFAA, WAAL…TVWL, IVIG…VAVP, LILA…LATA, AFFG…GWFL, and FFAS…EPLL.

Belongs to the UbiA prenyltransferase family. Protoheme IX farnesyltransferase subfamily.

The protein resides in the cell inner membrane. The enzyme catalyses heme b + (2E,6E)-farnesyl diphosphate + H2O = Fe(II)-heme o + diphosphate. Its pathway is porphyrin-containing compound metabolism; heme O biosynthesis; heme O from protoheme: step 1/1. In terms of biological role, converts heme B (protoheme IX) to heme O by substitution of the vinyl group on carbon 2 of heme B porphyrin ring with a hydroxyethyl farnesyl side group. The protein is Protoheme IX farnesyltransferase 2 of Paramagnetospirillum magneticum (strain ATCC 700264 / AMB-1) (Magnetospirillum magneticum).